A 132-amino-acid chain; its full sequence is Cell division protein FtsL (132 aa).

Residues 1–50 (MAELKKMRHNHYDVPVMDEPVIASQIKKTNQKKESFQLPQKKLNKISVFE) are Cytoplasmic-facing. The chain crosses the membrane as a helical span at residues 51–71 (KILCILLLCSIVGIVVITIQI). Topologically, residues 72 to 132 (RTTISETMNN…EIDGNLRKVK (61 aa)) are extracellular.

It belongs to the FtsL family.

The protein localises to the cell membrane. Functionally, essential cell division protein. The protein is Cell division protein FtsL of Melissococcus plutonius (strain ATCC 35311 / DSM 29964 / CIP 104052 / LMG 20360 / NCIMB 702443).